A 593-amino-acid polypeptide reads, in one-letter code: MTAIETDTPSNKVKEDESTDLRKDREKKKRSRVKQLLADIAKQVDFWFGDVNLHKDRFLREQIEKTRDGYIDISLLASFNKMKKITTDSKLIARAVKNSSVVEINLSGTKIRRRFPLGEKPQDVDSRTVYVELLPKNVTHSWIERVFGKYGMVVYVSIPRYKSTGDPKGFAFIEFETQEQAAKAIEVLNNPPEEAPRKAGMFPKTVKNKHLPPVEVTEHSITEGCGTEEKKKKKKKKSKARKDSVEKAEEDTKEQDMDIISEGVPKRRKTVSESSVPDVQEADKQTAKKEKKKKERAESFDQSEKVRQGKRKCSSSEEHDCSSAKQKKSDTKDLPQDEKPMVTQEVLQECKELSTEEEKDAVDKKEISVPKVKRKRKKKHKERHRVGEEVIPLRVLSKTEWLVLKAEYLTLQRASMASLKKSMSEMNHISEEEMQTQPSMQSFDIKNGKVETVKNEPLGPQFVCGVIGKITSSDPLQGRKYVKDAFSGVCEVVYVDMLEGDTECHVRFKSPEDAQTAVKTRSDLQGKHNWKLQILAGDNEQRYWQKILVDRQAKLNRPREKKRGTEKLIAKAEKMRLAKTQEASKHIRFSDGF.

Residues 1–11 are compositionally biased toward polar residues; the sequence is MTAIETDTPSN. Residues 1–28 are disordered; it reads MTAIETDTPSNKVKEDESTDLRKDREKK. Residues 12 to 24 show a composition bias toward basic and acidic residues; sequence KVKEDESTDLRKD. The 92-residue stretch at 30–121 folds into the HTH La-type RNA-binding domain; that stretch reads RSRVKQLLAD…RRRFPLGEKP (92 aa). The region spanning 127–205 is the RRM domain; that stretch reads RTVYVELLPK…PRKAGMFPKT (79 aa). Residues 191-363 form a disordered region; that stretch reads PPEEAPRKAG…STEEEKDAVD (173 aa). A compositionally biased stretch (basic residues) spans 231–240; the sequence is KKKKKKKSKA. A compositionally biased stretch (acidic residues) spans 248 to 259; the sequence is AEEDTKEQDMDI. 3 stretches are compositionally biased toward basic and acidic residues: residues 295–307, 314–340, and 348–363; these read ERAE…EKVR, SSSE…DEKP, and QECK…DAVD. The xRRM domain maps to 461–574; that stretch reads QFVCGVIGKI…TEKLIAKAEK (114 aa).

The protein belongs to the LARP7 family. In terms of assembly, core component of the 7SK RNP complex. Associates with box C/D small nucleolar ribonucleoprotein (snoRNP) complexes.

Its subcellular location is the nucleus. It localises to the nucleoplasm. RNA-binding protein that specifically binds distinct small nuclear RNA (snRNAs) and regulates their processing and function. Specifically binds the 7SK snRNA (7SK RNA) and acts as a core component of the 7SK ribonucleoprotein (RNP) complex, thereby acting as a negative regulator of transcription elongation by RNA polymerase II. The 7SK RNP complex sequesters the positive transcription elongation factor b (P-TEFb) in a large inactive 7SK RNP complex preventing RNA polymerase II phosphorylation and subsequent transcriptional elongation. The 7SK RNP complex also promotes snRNA gene transcription by RNA polymerase II via interaction with the little elongation complex (LEC). LARP7 specifically binds to the highly conserved 3'-terminal U-rich stretch of 7SK RNA; on stimulation, remains associated with 7SK RNA, whereas P-TEFb is released from the complex. LARP7 also acts as a regulator of mRNA splicing fidelity by promoting U6 snRNA processing. Specifically binds U6 snRNAs and associates with a subset of box C/D RNP complexes: promotes U6 snRNA 2'-O-methylation by facilitating U6 snRNA loading into box C/D RNP complexes. U6 snRNA 2'-O-methylation is required for mRNA splicing fidelity. The polypeptide is La-related protein 7 (Xenopus tropicalis (Western clawed frog)).